An 87-amino-acid polypeptide reads, in one-letter code: Small ribosomal subunit protein uS15 (87 aa).

This sequence belongs to the universal ribosomal protein uS15 family. In terms of assembly, part of the 30S ribosomal subunit. Forms a bridge to the 50S subunit in the 70S ribosome, contacting the 23S rRNA.

One of the primary rRNA binding proteins, it binds directly to 16S rRNA where it helps nucleate assembly of the platform of the 30S subunit by binding and bridging several RNA helices of the 16S rRNA. In terms of biological role, forms an intersubunit bridge (bridge B4) with the 23S rRNA of the 50S subunit in the ribosome. This Alkaliphilus metalliredigens (strain QYMF) protein is Small ribosomal subunit protein uS15.